A 217-amino-acid chain; its full sequence is GTP cyclohydrolase 1 (217 aa).

Zn(2+)-binding residues include Cys109, His112, and Cys180.

This sequence belongs to the GTP cyclohydrolase I family. In terms of assembly, toroid-shaped homodecamer, composed of two pentamers of five dimers.

It catalyses the reaction GTP + H2O = 7,8-dihydroneopterin 3'-triphosphate + formate + H(+). The protein operates within cofactor biosynthesis; 7,8-dihydroneopterin triphosphate biosynthesis; 7,8-dihydroneopterin triphosphate from GTP: step 1/1. The polypeptide is GTP cyclohydrolase 1 (Vibrio parahaemolyticus serotype O3:K6 (strain RIMD 2210633)).